A 226-amino-acid polypeptide reads, in one-letter code: Purine nucleoside phosphorylase Cj1217c (226 aa).

Zn(2+) is bound by residues H58, C93, and H109.

This sequence belongs to the purine nucleoside phosphorylase YfiH/LACC1 family. Homodimer. Requires Cu(2+) as cofactor. Zn(2+) serves as cofactor.

It catalyses the reaction adenosine + phosphate = alpha-D-ribose 1-phosphate + adenine. It carries out the reaction S-methyl-5'-thioadenosine + phosphate = 5-(methylsulfanyl)-alpha-D-ribose 1-phosphate + adenine. The catalysed reaction is inosine + phosphate = alpha-D-ribose 1-phosphate + hypoxanthine. The enzyme catalyses adenosine + H2O + H(+) = inosine + NH4(+). Its function is as follows. Purine nucleoside enzyme that catalyzes the phosphorolysis of adenosine and inosine nucleosides, yielding D-ribose 1-phosphate and the respective free bases, adenine and hypoxanthine. Also catalyzes the phosphorolysis of S-methyl-5'-thioadenosine into adenine and S-methyl-5-thio-alpha-D-ribose 1-phosphate. Also has adenosine deaminase activity. The protein is Purine nucleoside phosphorylase Cj1217c of Campylobacter jejuni subsp. jejuni serotype O:2 (strain ATCC 700819 / NCTC 11168).